A 499-amino-acid polypeptide reads, in one-letter code: Glycerol kinase (499 aa).

An ADP-binding site is contributed by Thr17. Residues Thr17, Thr18, and Ser19 each coordinate ATP. Residue Thr17 coordinates sn-glycerol 3-phosphate. Arg21 serves as a coordination point for ADP. Residues Arg87, Glu88, Tyr139, and Asp243 each coordinate sn-glycerol 3-phosphate. Positions 87, 88, 139, 243, and 244 each coordinate glycerol. Residues Thr265 and Gly308 each coordinate ADP. Thr265, Gly308, Gln312, and Gly409 together coordinate ATP. Gly409 and Asn413 together coordinate ADP.

Belongs to the FGGY kinase family.

The catalysed reaction is glycerol + ATP = sn-glycerol 3-phosphate + ADP + H(+). Its pathway is polyol metabolism; glycerol degradation via glycerol kinase pathway; sn-glycerol 3-phosphate from glycerol: step 1/1. Inhibited by fructose 1,6-bisphosphate (FBP). Key enzyme in the regulation of glycerol uptake and metabolism. Catalyzes the phosphorylation of glycerol to yield sn-glycerol 3-phosphate. The polypeptide is Glycerol kinase (Pseudomonas putida (strain GB-1)).